A 93-amino-acid chain; its full sequence is Putative septation protein SpoVG (93 aa).

This sequence belongs to the SpoVG family.

Could be involved in septation. In Lachnoclostridium phytofermentans (strain ATCC 700394 / DSM 18823 / ISDg) (Clostridium phytofermentans), this protein is Putative septation protein SpoVG.